A 205-amino-acid polypeptide reads, in one-letter code: Alpha-1-acid glycoprotein (205 aa).

A signal peptide spans 1-18; it reads MALHMVLVVLSLLPLLEA. N-linked (GlcNAc...) asparagine glycosylation is found at asparagine 25, asparagine 34, asparagine 76, asparagine 94, asparagine 104, and asparagine 134. Cysteine 91 and cysteine 183 are oxidised to a cystine.

Belongs to the calycin superfamily. Lipocalin family.

It is found in the secreted. In terms of biological role, functions as a transport protein in the blood stream. Binds various ligands in the interior of its beta-barrel domain. Appears to function in modulating the activity of the immune system during the acute-phase reaction. The protein is Alpha-1-acid glycoprotein (Orm1) of Rattus norvegicus (Rat).